The primary structure comprises 131 residues: Fumarate reductase subunit C (131 aa).

3 helical membrane passes run 30–50 (EGTAVPAVWFSIELIFGLFAL), 57–77 (WMGFVGFLQNPVVVILNLIAL), and 109–129 (IIKGLWVVTAVVTVVILYVAL).

This sequence belongs to the FrdC family. Part of an enzyme complex containing four subunits: a flavoprotein (FrdA), an iron-sulfur protein (FrdB), and two hydrophobic anchor proteins (FrdC and FrdD).

The protein localises to the cell inner membrane. Its function is as follows. Two distinct, membrane-bound, FAD-containing enzymes are responsible for the catalysis of fumarate and succinate interconversion; fumarate reductase is used in anaerobic growth, and succinate dehydrogenase is used in aerobic growth. Anchors the catalytic components of the fumarate reductase complex to the cell inner membrane, binds quinones. This is Fumarate reductase subunit C from Citrobacter koseri (strain ATCC BAA-895 / CDC 4225-83 / SGSC4696).